The chain runs to 387 residues: Phosphoglycerate kinase (387 aa).

Residues aspartate 21–asparagine 23, arginine 36, histidine 59–arginine 62, arginine 113, and arginine 146 contribute to the substrate site. ATP-binding positions include lysine 197, glutamate 314, and glycine 340–threonine 343.

Belongs to the phosphoglycerate kinase family. In terms of assembly, monomer.

It is found in the cytoplasm. The enzyme catalyses (2R)-3-phosphoglycerate + ATP = (2R)-3-phospho-glyceroyl phosphate + ADP. It participates in carbohydrate degradation; glycolysis; pyruvate from D-glyceraldehyde 3-phosphate: step 2/5. The polypeptide is Phosphoglycerate kinase (Cronobacter sakazakii (strain ATCC BAA-894) (Enterobacter sakazakii)).